Here is an 843-residue protein sequence, read N- to C-terminus: Adenylate cyclase (843 aa).

The tract at residues 1–542 (MECNLAQAKQ…NLRQSFPSTI (542 aa)) is catalytic. The regulatory stretch occupies residues 549–843 (SDLLNQCEIR…VPFKFRQMNK (295 aa)).

This sequence belongs to the adenylyl cyclase class-1 family.

It localises to the cytoplasm. The catalysed reaction is ATP = 3',5'-cyclic AMP + diphosphate. Functionally, plays an essential role in competence development. This is Adenylate cyclase (cyaA) from Haemophilus influenzae (strain ATCC 51907 / DSM 11121 / KW20 / Rd).